The primary structure comprises 338 residues: dTDP-glucose 4,6-dehydratase (338 aa).

Residues 12–13 (FI), 33–36 (DKLT), 59–60 (DI), 81–85 (LAAES), and T100 contribute to the NAD(+) site. Residue S85 participates in substrate binding. T134 provides a ligand contact to substrate. Catalysis depends on D135, which acts as the Proton donor. Residues E136 and Y160 each act as proton acceptor in the active site. 160–164 (YSASK) contributes to the NAD(+) binding site. A substrate-binding site is contributed by N189. Position 190 (N190) interacts with NAD(+). Substrate contacts are provided by residues 199-200 (KL), 215-217 (PIY), R224, N259, and 293-297 (DRPGH).

This sequence belongs to the NAD(P)-dependent epimerase/dehydratase family. dTDP-glucose dehydratase subfamily. As to quaternary structure, homodimer. The cofactor is NAD(+).

The enzyme catalyses dTDP-alpha-D-glucose = dTDP-4-dehydro-6-deoxy-alpha-D-glucose + H2O. It participates in carbohydrate biosynthesis; dTDP-L-rhamnose biosynthesis. Its pathway is bacterial outer membrane biogenesis; LPS O-antigen biosynthesis. Catalyzes the dehydration of dTDP-D-glucose to form dTDP-6-deoxy-D-xylo-4-hexulose via a three-step process involving oxidation, dehydration and reduction. This Haemophilus influenzae (strain ATCC 51907 / DSM 11121 / KW20 / Rd) protein is dTDP-glucose 4,6-dehydratase (rffG).